The following is a 1280-amino-acid chain: E3 ubiquitin-protein ligase RKP (1280 aa).

A B30.2/SPRY domain is found at 82–269 (KLHGDLDVSV…CELNFGAYPF (188 aa)). A helical membrane pass occupies residues 551–571 (SVLVSLFSVILHFLSEGFAML). Residues 669-719 (DRGKNTAQSSRGRCSSIPERSSHVAAECSAGSFSEEIDDKPSTSNQSDPDF) are disordered. A helical transmembrane segment spans residues 834–854 (ALCMWVVQLLLVLSKMDSVFV). The RING-type zinc finger occupies 1217–1252 (CCICYAGEANAMIAPCSHRSCYGCITRHLLNCQRCF).

It is found in the membrane. The enzyme catalyses S-ubiquitinyl-[E2 ubiquitin-conjugating enzyme]-L-cysteine + [acceptor protein]-L-lysine = [E2 ubiquitin-conjugating enzyme]-L-cysteine + N(6)-ubiquitinyl-[acceptor protein]-L-lysine.. Its function is as follows. E3 ubiquitin-protein ligase that promotes the ubiquitination and proteasomal degradation of KRP1 and KRP2. The protein is E3 ubiquitin-protein ligase RKP (RKP) of Arabidopsis thaliana (Mouse-ear cress).